The primary structure comprises 198 residues: Segregation and condensation protein B (198 aa).

The tract at residues 168–198 is disordered; it reads KLADPATDEPDQNEMDLFFDRFNQSKEQEEE.

Belongs to the ScpB family. In terms of assembly, homodimer. Homodimerization may be required to stabilize the binding of ScpA to the Smc head domains. Component of a cohesin-like complex composed of ScpA, ScpB and the Smc homodimer, in which ScpA and ScpB bind to the head domain of Smc. The presence of the three proteins is required for the association of the complex with DNA.

It localises to the cytoplasm. Participates in chromosomal partition during cell division. May act via the formation of a condensin-like complex containing Smc and ScpA that pull DNA away from mid-cell into both cell halves. This Listeria monocytogenes serotype 4b (strain CLIP80459) protein is Segregation and condensation protein B.